A 309-amino-acid polypeptide reads, in one-letter code: Probable 3-hydroxyacyl-CoA dehydrogenase B0272.3 (309 aa).

The protein belongs to the 3-hydroxyacyl-CoA dehydrogenase family. In terms of assembly, homodimer.

It localises to the mitochondrion matrix. It catalyses the reaction a (3S)-3-hydroxyacyl-CoA + NAD(+) = a 3-oxoacyl-CoA + NADH + H(+). The protein operates within lipid metabolism; fatty acid beta-oxidation. The protein is Probable 3-hydroxyacyl-CoA dehydrogenase B0272.3 of Caenorhabditis elegans.